The sequence spans 239 residues: Sugar fermentation stimulation protein homolog (239 aa).

This sequence belongs to the SfsA family.

The chain is Sugar fermentation stimulation protein homolog from Synechococcus sp. (strain JA-3-3Ab) (Cyanobacteria bacterium Yellowstone A-Prime).